The chain runs to 407 residues: Phosphopentomutase (407 aa).

The Mn(2+) site is built by D10, D306, H311, D347, H348, and H359.

This sequence belongs to the phosphopentomutase family. Mn(2+) serves as cofactor.

It localises to the cytoplasm. The enzyme catalyses 2-deoxy-alpha-D-ribose 1-phosphate = 2-deoxy-D-ribose 5-phosphate. The catalysed reaction is alpha-D-ribose 1-phosphate = D-ribose 5-phosphate. It participates in carbohydrate degradation; 2-deoxy-D-ribose 1-phosphate degradation; D-glyceraldehyde 3-phosphate and acetaldehyde from 2-deoxy-alpha-D-ribose 1-phosphate: step 1/2. Functionally, isomerase that catalyzes the conversion of deoxy-ribose 1-phosphate (dRib-1-P) and ribose 1-phosphate (Rib-1-P) to deoxy-ribose 5-phosphate (dRib-5-P) and ribose 5-phosphate (Rib-5-P), respectively. In Salmonella dublin (strain CT_02021853), this protein is Phosphopentomutase.